Reading from the N-terminus, the 491-residue chain is (S)-canadine synthase (491 aa).

A helical transmembrane segment spans residues 6–26 (LLVCATVAIVFATTTIIRILF). Position 434 (cysteine 434) interacts with heme.

It belongs to the cytochrome P450 family. Requires heme as cofactor. In terms of tissue distribution, expressed at low levels in roots.

The protein resides in the endoplasmic reticulum membrane. The protein localises to the microsome membrane. The catalysed reaction is (S)-tetrahydrocolumbamine + reduced [NADPH--hemoprotein reductase] + O2 = (S)-canadine + oxidized [NADPH--hemoprotein reductase] + 2 H2O + H(+). In terms of biological role, involved in the last but one step of the biosynthesis of berberine, an antimicrobial benzylisoquinoline alkaloid. Converts (S)-tetrahydrocolumbamine (THC) to (S)-tetrahydroberberine (THB) also called (S)-canadine. This Coptis japonica (Japanese goldthread) protein is (S)-canadine synthase (CYP719A1).